The primary structure comprises 228 residues: Cytochrome c oxidase subunit 2 (228 aa).

The Mitochondrial intermembrane segment spans residues 1-26; sequence MSTWANLGLQDSASPLMEQLIFFHDH. A helical membrane pass occupies residues 27–48; that stretch reads ALLILVMITVLVGYLMFMLFFN. Topologically, residues 49 to 62 are mitochondrial matrix; sequence NYVNRFLLHGQLIE. Residues 63–82 traverse the membrane as a helical segment; that stretch reads MIWTILPAIILLFIALPSLR. At 83–228 the chain is on the mitochondrial intermembrane side; sequence LLYLLDEINE…FIKWISSNNS (146 aa). The Cu cation site is built by H161, C196, E198, C200, H204, and M207. Residue E198 coordinates Mg(2+).

The protein belongs to the cytochrome c oxidase subunit 2 family. As to quaternary structure, component of the cytochrome c oxidase (complex IV, CIV), a multisubunit enzyme composed of a catalytic core of 3 subunits and several supernumerary subunits. The complex exists as a monomer or a dimer and forms supercomplexes (SCs) in the inner mitochondrial membrane with ubiquinol-cytochrome c oxidoreductase (cytochrome b-c1 complex, complex III, CIII). Requires Cu cation as cofactor.

Its subcellular location is the mitochondrion inner membrane. It carries out the reaction 4 Fe(II)-[cytochrome c] + O2 + 8 H(+)(in) = 4 Fe(III)-[cytochrome c] + 2 H2O + 4 H(+)(out). Component of the cytochrome c oxidase, the last enzyme in the mitochondrial electron transport chain which drives oxidative phosphorylation. The respiratory chain contains 3 multisubunit complexes succinate dehydrogenase (complex II, CII), ubiquinol-cytochrome c oxidoreductase (cytochrome b-c1 complex, complex III, CIII) and cytochrome c oxidase (complex IV, CIV), that cooperate to transfer electrons derived from NADH and succinate to molecular oxygen, creating an electrochemical gradient over the inner membrane that drives transmembrane transport and the ATP synthase. Cytochrome c oxidase is the component of the respiratory chain that catalyzes the reduction of oxygen to water. Electrons originating from reduced cytochrome c in the intermembrane space (IMS) are transferred via the dinuclear copper A center (CU(A)) of subunit 2 and heme A of subunit 1 to the active site in subunit 1, a binuclear center (BNC) formed by heme A3 and copper B (CU(B)). The BNC reduces molecular oxygen to 2 water molecules using 4 electrons from cytochrome c in the IMS and 4 protons from the mitochondrial matrix. The sequence is that of Cytochrome c oxidase subunit 2 (mt:CoII) from Drosophila yakuba (Fruit fly).